Here is a 173-residue protein sequence, read N- to C-terminus: Alpha-crystallin A chain (173 aa).

M1 carries the N-acetylmethionine modification. The required for complex formation with BFSP1 and BFSP2 stretch occupies residues M1–E63. Position 6 is a deamidated glutamine; partial (Q6). Phosphoserine is present on S45. A Deamidated glutamine; partial modification is found at Q50. One can recognise a sHSP domain in the interval L52–S162. N6-acetyllysine occurs at positions 70 and 99. Zn(2+) contacts are provided by H100, E102, and H107. Residues K145–S173 are disordered. A glycan (O-linked (GlcNAc) serine) is linked at S162.

The protein belongs to the small heat shock protein (HSP20) family. Heteromer composed of three CRYAA and one CRYAB subunits. Zinc coordination is achieved at least by His-100, Glu-102 and His-107. His-100 and Glu-102 come from the same molecule within the oligomer, while His-107 residue is provided by another molecule. Inter-subunit bridging via zinc ions enhances stability, which is crucial as there is no protein turn over in the lens. Can also form homodimers and homotetramers (dimers of dimers) which serve as the building blocks of homooligomers. Part of a complex required for lens intermediate filament formation composed of BFSP1, BFSP2 and CRYAA. Acetylation at Lys-70 may increase chaperone activity. Post-translationally, undergoes age-dependent proteolytical cleavage at the C-terminus.

It is found in the cytoplasm. The protein localises to the nucleus. Functionally, contributes to the transparency and refractive index of the lens. Acts as a chaperone, preventing aggregation of various proteins under a wide range of stress conditions. Required for the correct formation of lens intermediate filaments as part of a complex composed of BFSP1, BFSP2 and CRYAA. The polypeptide is Alpha-crystallin A chain (CRYAA) (Erinaceus europaeus (Western European hedgehog)).